A 199-amino-acid chain; its full sequence is uncharacterized protein (199 aa).

This is an uncharacterized protein from Rattus norvegicus (Rat).